A 338-amino-acid polypeptide reads, in one-letter code: Phenylalanine--tRNA ligase alpha subunit (338 aa).

Position 252 (Glu252) interacts with Mg(2+).

This sequence belongs to the class-II aminoacyl-tRNA synthetase family. Phe-tRNA synthetase alpha subunit type 1 subfamily. As to quaternary structure, tetramer of two alpha and two beta subunits. The cofactor is Mg(2+).

It localises to the cytoplasm. The enzyme catalyses tRNA(Phe) + L-phenylalanine + ATP = L-phenylalanyl-tRNA(Phe) + AMP + diphosphate + H(+). The chain is Phenylalanine--tRNA ligase alpha subunit from Pseudomonas syringae pv. tomato (strain ATCC BAA-871 / DC3000).